The primary structure comprises 489 residues: uncharacterized protein (489 aa).

Residues 2–84 (IKITVKRFNG…GMIIEPLRGF (83 aa)) form the 2Fe-2S ferredoxin-type domain. [2Fe-2S] cluster-binding residues include Cys-48, Cys-53, Cys-56, and Cys-68. 2 consecutive 4Fe-4S ferredoxin-type domains span residues 123–155 (KYVE…YPGP) and 177–205 (TAYF…IVHR). [4Fe-4S] cluster contacts are provided by Cys-134, Cys-137, Cys-140, Cys-144, Cys-186, Cys-189, Cys-192, and Cys-196.

It belongs to the succinate dehydrogenase/fumarate reductase iron-sulfur protein family.

This is an uncharacterized protein from Methanocaldococcus jannaschii (strain ATCC 43067 / DSM 2661 / JAL-1 / JCM 10045 / NBRC 100440) (Methanococcus jannaschii).